Here is a 165-residue protein sequence, read N- to C-terminus: Protein-export protein SecB (165 aa).

It belongs to the SecB family. Homotetramer, a dimer of dimers. One homotetramer interacts with 1 SecA dimer.

Its subcellular location is the cytoplasm. Its function is as follows. One of the proteins required for the normal export of preproteins out of the cell cytoplasm. It is a molecular chaperone that binds to a subset of precursor proteins, maintaining them in a translocation-competent state. It also specifically binds to its receptor SecA. The polypeptide is Protein-export protein SecB (Ruegeria pomeroyi (strain ATCC 700808 / DSM 15171 / DSS-3) (Silicibacter pomeroyi)).